A 535-amino-acid chain; its full sequence is uncharacterized protein (535 aa).

The helical transmembrane segment at 8-24 (LVVFGSLVFFFGLVKYF) threads the bilayer. K50 is covalently cross-linked (Glycyl lysine isopeptide (Lys-Gly) (interchain with G-Cter in ubiquitin)). Mn(2+) is bound by residues D316, D327, H412, E452, and E493.

It belongs to the peptidase M24B family. Mn(2+) serves as cofactor.

It localises to the membrane. This is an uncharacterized protein from Saccharomyces cerevisiae (strain ATCC 204508 / S288c) (Baker's yeast).